Here is an 883-residue protein sequence, read N- to C-terminus: MPSLNEIRSTFLNYFGAADHAIVPSAPLVPQNDPTLLFVNAGMVPFKNVFTGAETPPHPRATSSQKCVRAGGKHNDLDNVGYTARHHTFFEMLGNFSFGDYFKEQAITHAWTLLTRDFALPKDKLLVTVYHTDTEAADLWKKIAGLSDDRIIRIATNDNFWSMGDTGPCGPCSEIFFDHGDHIPGGPPGSPDEDGDRFIEIWNLVFMQFEQMAGGERVSLPKPSIDTGMGLERIAAVMQGVHDNYDIDLFKALIAASVELTGVRAEGAQAPSHRVIADHLRSSSFLLADGVTPSNEGRGYVLRRIMRRAMRHAYLLGANEPLMHRLAPTLVAQMGQAYPELRRAEASIVETLRQEEERFRVTLGRGMGLLDEATAGLSAGGVLDGETAFKLYDTYGFPLDLTQDAVRARGITVDTDGFDVAMDRQRTMARANWAGSGQTGAAAAWFGIKEQSGPTNFVGYDTTETTGTVKAIVLDGAPVEAAQAGASVDVLLDRTSFYAESGGQAGDTGVIEAHGVESRVTDTQKQAGDLYVHRVELAGPLKVGDSVVASVDAARRTTTRANHSAAHLVHAALHHVLGPHVAQKGQMVDGDRMRFDFSHGGPLTADEIERIEAEVNAVIRQNVPAQTKEMAPQEAIEAGAVALFGEKYGDSVRVLTLGESLTETGKAYSVELCGGTHVARTGDIALFKIVSEQGVASGVRRIEALTGEAARRFLLDQAGVAKALADQFKTPVAEVLARVDALVAERKALERQLAEAKKQLALGGGSGGAASGPEDVAGTALIARVLDGVGGKELRGVAEEFKKQLTNGGVVALVGVTDGKAAVTVAVTADLTAKFSAADLAKAAVIAMGGQGAGGKADFAQGGAPDATKAQAGLDAIKAALAG.

Residues H563, H567, C673, and H677 each contribute to the Zn(2+) site.

The protein belongs to the class-II aminoacyl-tRNA synthetase family. It depends on Zn(2+) as a cofactor.

It localises to the cytoplasm. The catalysed reaction is tRNA(Ala) + L-alanine + ATP = L-alanyl-tRNA(Ala) + AMP + diphosphate. Functionally, catalyzes the attachment of alanine to tRNA(Ala) in a two-step reaction: alanine is first activated by ATP to form Ala-AMP and then transferred to the acceptor end of tRNA(Ala). Also edits incorrectly charged Ser-tRNA(Ala) and Gly-tRNA(Ala) via its editing domain. This chain is Alanine--tRNA ligase, found in Caulobacter sp. (strain K31).